A 480-amino-acid polypeptide reads, in one-letter code: Initiation-specific alpha-1,6-mannosyltransferase (480 aa).

Over 1–15 (MSRKLSHLIATRKSK) the chain is Cytoplasmic. A helical; Signal-anchor for type II membrane protein transmembrane segment spans residues 16–30 (TIVVTVLLIYSLLTF). Topologically, residues 31 to 480 (HLSNKRLLSQ…EDADKNAGHK (450 aa)) are lumenal. Positions 187–189 (DMD) match the DXD motif motif. Residues Asn-203, Asn-281, Asn-341, and Asn-393 are each glycosylated (N-linked (GlcNAc...) asparagine).

This sequence belongs to the glycosyltransferase 32 family. The cofactor is Mn(2+). Glycosylated.

It localises to the endoplasmic reticulum membrane. It is found in the golgi apparatus membrane. It carries out the reaction Transfers an alpha-D-mannosyl residue from GDP-mannose into lipid-linked oligosaccharide, forming an alpha-(1-&gt;6)-D-mannosyl-D-mannose linkage.. Functionally, mannosyltransferase involved in outer chain elongation of asparagine-linked oligosaccharides of the type Man(9)GlcNAc(2). Adds the first alpha-1,6-mannose to the Man(8)GlcNAc(2) and Man(9)GlcNAc(2), but not Man(5)GlcNAc(2), endoplasmic reticulum intermediates. Represents the first enzymatic event required for synthesis of outer chain mannose linkages on yeast secretory proteins. Also has the potential to transfer a second alpha-1,6-mannose to the Man(8)GlcNAc(2) core oligosaccharide. The chain is Initiation-specific alpha-1,6-mannosyltransferase from Saccharomyces cerevisiae (strain ATCC 204508 / S288c) (Baker's yeast).